A 366-amino-acid chain; its full sequence is Probable trehalose-phosphate phosphatase 3 (366 aa).

This sequence belongs to the trehalose phosphatase family. The cofactor is a divalent metal cation.

It catalyses the reaction alpha,alpha-trehalose 6-phosphate + H2O = alpha,alpha-trehalose + phosphate. It functions in the pathway glycan biosynthesis; trehalose biosynthesis. Functionally, removes the phosphate from trehalose 6-phosphate to produce free trehalose. Trehalose accumulation in plant may improve abiotic stress tolerance. In Oryza sativa subsp. japonica (Rice), this protein is Probable trehalose-phosphate phosphatase 3 (TPP3).